The following is a 523-amino-acid chain: Calcium uptake protein 3, mitochondrial (523 aa).

Residues 1–6 constitute a mitochondrion transit peptide; sequence MAALRR. One can recognise an EF-hand 1 domain in the interval 226–261; that stretch reads PHAGFRIAFNMFDTDGNEMVDKKEFLVLQEIFRKKN. Ca(2+) contacts are provided by Asp238, Asp240, Asn242, Met244, Asp246, and Glu249. The EF-hand 2; degenerate domain maps to 395 to 430; that stretch reads ENTSVFLENVRYSISEEKGITFDEFRSFFQFLNNLE. In terms of domain architecture, EF-hand 3 spans 464–499; that stretch reads SPHLVNTVFKIFDVDKDDQLSYKEFIGIMKDRLHRG. Positions 476, 478, 480, 482, and 487 each coordinate Ca(2+).

It belongs to the MICU1 family. MICU3 subfamily. As to quaternary structure, heterodimer; disulfide-linked; heterodimerizes with MICU1. Heterodimerizes with isoform 3 of MICU1 (MICU1.1) in skeletal muscle. Component of the uniplex complex, composed of MCU, EMRE/SMDT1, MICU1 and MICU3 in a 4:4:1:1 stoichiometry. As to expression, predominantly expressed in skeletal muscle and central nervous system.

It is found in the mitochondrion intermembrane space. The protein resides in the mitochondrion inner membrane. Tissue-specific calcium sensor of the mitochondrial calcium uniporter (MCU) channel, which specifically regulates MCU channel activity in the central nervous system and skeletal muscle. Senses calcium level via its EF-hand domains: compared to MICU1 and MICU2, MICU3 has a higher affinity for calcium. MICU1 and MICU3 form a disulfide-linked heterodimer that stimulates and inhibits MCU activity, depending on the concentration of calcium. At low calcium levels, MICU1 occludes the pore of the MCU channel, preventing mitochondrial calcium uptake. At higher calcium levels, calcium-binding to MICU1 and MICU3 induces a conformational change that weakens MCU-MICU1 interactions and moves the MICU1-MICU3 heterodimer away from the pore, allowing calcium permeation through the MCU channel. The high calcium affinity of MICU3 lowers the calcium threshold necessary for calcium permeation through the MCU channel. The MICU1-MICU3 heterodimer promotes flexibility of neurotransmission in neuronal cells by enhancing mitochondrial calcium uptake in presynapses. It is also required to increase mitochondrial calcium uptake in skeletal muscle cells, thereby increasing ATP production. The sequence is that of Calcium uptake protein 3, mitochondrial from Mus musculus (Mouse).